The chain runs to 55 residues: Conotoxin Cal22b (55 aa).

The propeptide occupies 1–5 (GRPSA).

Contains 4 disulfide bonds. Expressed by the venom duct.

The protein localises to the secreted. In terms of biological role, probable neurotoxin with unknown target. Possibly targets ion channels. In Californiconus californicus (California cone), this protein is Conotoxin Cal22b.